A 20-amino-acid polypeptide reads, in one-letter code: Thylakoid lumenal 14.7 kDa protein (20 aa).

Residues 1–20 are disordered; that stretch reads KTGVNKPELLPKEETTVIDV. Over residues 9–20 the composition is skewed to basic and acidic residues; sequence LLPKEETTVIDV.

It localises to the plastid. It is found in the chloroplast thylakoid lumen. The protein is Thylakoid lumenal 14.7 kDa protein of Spinacia oleracea (Spinach).